Here is a 555-residue protein sequence, read N- to C-terminus: Neutral amino acid transporter B(0) (555 aa).

Position 1 is an N-acetylmethionine (Met1). At Met1–Ala52 the chain is on the cytoplasmic side. A helical membrane pass occupies residues Asn53–Leu82. Over Gly83–Glu95 the chain is Extracellular. The chain crosses the membrane as a helical span at residues Leu96–Ala117. Residues Ala118–Trp131 lie on the Cytoplasmic side of the membrane. The helical transmembrane segment at Ala132–Leu154 threads the bilayer. At Lys155–Cys239 the chain is on the extracellular side. Residues Asn164 and Asn231 are each glycosylated (N-linked (GlcNAc...) asparagine). The helical transmembrane segment at Glu240 to Leu262 threads the bilayer. The Cytoplasmic portion of the chain corresponds to Gly263–Arg271. Residues Phe272 to Val299 traverse the membrane as a helical segment. Over Ala300–Ile320 the chain is Extracellular. A helical transmembrane segment spans residues Val321–Phe342. Residues Thr343 to Pro347 are Cytoplasmic-facing. An intramembrane region (discontinuously helical) is located at residues Tyr348 to Val378. The Cytoplasmic segment spans residues Glu379–His387. A helical transmembrane segment spans residues Ile388 to Phe414. Positions 396, 398, and 400 each coordinate Na(+). Over Ile415–Lys427 the chain is Extracellular. Positions Ile428 to Ser461 form an intramembrane region, discontinuously helical. Residues Leu462–Asp474 are Extracellular-facing. Residues Trp475–Leu496 traverse the membrane as a helical segment. Positions 485 and 489 each coordinate Na(+). The Cytoplasmic segment spans residues Gln497–Met555. 5 positions are modified to phosphoserine: Ser507, Ser508, Ser520, Ser545, and Ser553. The disordered stretch occupies residues Leu534–Met555.

The protein belongs to the dicarboxylate/amino acid:cation symporter (DAACS) (TC 2.A.23) family. As to quaternary structure, homotrimer.

The protein resides in the cell membrane. Its subcellular location is the melanosome. It catalyses the reaction L-glutamine(out) + L-serine(in) + Na(+)(out) = L-glutamine(in) + L-serine(out) + Na(+)(in). It carries out the reaction L-glutamine(in) + L-serine(out) + Na(+)(out) = L-glutamine(out) + L-serine(in) + Na(+)(in). The enzyme catalyses L-threonine(in) + L-glutamine(out) + Na(+)(out) = L-threonine(out) + L-glutamine(in) + Na(+)(in). The catalysed reaction is L-threonine(out) + L-glutamine(in) + Na(+)(out) = L-threonine(in) + L-glutamine(out) + Na(+)(in). It catalyses the reaction L-asparagine(in) + L-glutamine(out) + Na(+)(out) = L-asparagine(out) + L-glutamine(in) + Na(+)(in). It carries out the reaction L-asparagine(out) + L-glutamine(in) + Na(+)(out) = L-asparagine(in) + L-glutamine(out) + Na(+)(in). The enzyme catalyses L-glutamine(in) + L-alanine(out) + Na(+)(out) = L-glutamine(out) + L-alanine(in) + Na(+)(in). The catalysed reaction is L-valine(out) + L-glutamine(in) + Na(+)(out) = L-valine(in) + L-glutamine(out) + Na(+)(in). It catalyses the reaction L-glutamine(in) + L-methionine(out) + Na(+)(out) = L-glutamine(out) + L-methionine(in) + Na(+)(in). It carries out the reaction L-glutamine(in) + L-glutamate(out) + Na(+)(out) + H(+)(out) = L-glutamine(out) + L-glutamate(in) + Na(+)(in) + H(+)(in). The enzyme catalyses D-serine(in) + L-glutamine(out) + Na(+)(out) = D-serine(out) + L-glutamine(in) + Na(+)(in). The catalysed reaction is D-serine(in) + L-alanine(out) + Na(+)(out) = D-serine(out) + L-alanine(in) + Na(+)(in). It catalyses the reaction nitrate(in) = nitrate(out). It carries out the reaction iodide(out) = iodide(in). The enzyme catalyses thiocyanate(in) = thiocyanate(out). Down-regulated at acidic pH. Its function is as follows. Sodium-coupled antiporter of neutral amino acids. In a tri-substrate transport cycle, exchanges neutral amino acids between the extracellular and intracellular compartments, coupled to the inward cotransport of at least one sodium ion. The preferred substrate is the essential amino acid L-glutamine, a precursor for biosynthesis of proteins, nucleotides and amine sugars as well as an alternative fuel for mitochondrial oxidative phosphorylation. Exchanges L-glutamine with other neutral amino acids such as L-serine, L-threonine and L-asparagine in a bidirectional way. Provides L-glutamine to proliferating stem and activated cells driving the metabolic switch toward cell differentiation. The transport cycle is usually pH-independent, with the exception of L-glutamate. Transports extracellular L-glutamate coupled to the cotransport of one proton and one sodium ion in exchange for intracellular L-glutamine counter-ion. May provide for L-glutamate uptake in glial cells regulating glutamine/glutamate cycle in the nervous system. Can transport D-amino acids. Mediates D-serine release from the retinal glia potentially affecting NMDA receptor function in retinal neurons. Displays sodium- and amino acid-dependent but uncoupled channel-like anion conductance with a preference SCN(-) &gt;&gt; NO3(-) &gt; I(-) &gt; Cl(-). Through binding of the fusogenic protein syncytin-1/ERVW-1 may mediate trophoblasts syncytialization, the spontaneous fusion of their plasma membranes, an essential process in placental development. This is Neutral amino acid transporter B(0) (Slc1a5) from Rattus norvegicus (Rat).